The chain runs to 1063 residues: MLRLANRVSRKDSGNLGIAQLKKRLLATSGVSQGEILSKYPIGLNMHGYVIEQVQPIPEFSLVAVKLKHSRTGSEHLHLDTPNDKNNVFSVAFKTNAPDATGVPHILEHTTLCGSFKYPVRDPFFKMLNRSLSNFMNAMTGHDYTYYPFATTNAKDFENLMDVYLSSVFEPLLTHESFMQEGWRLENSDLSDPKSPIIFKGVVYNEMKGQYSNSAYYYWIKFQEAIYGSLNNSGGNPNEITDLRYEDLVDFHSSNYHPSNAKTFTYGNIELVNHLNKLNEFFESFGSRGIRTNVRKPITELNPNYESDVTVKGPLDTMSSRPIEEQYKSSITWVIGNPLDESKLYDVFKWKVLSSLLCDGHNSPFYQELIEKEYGEDFAVNYGLDATTALLSFTIGLNNLSLEKAKNLEDKVRGIFVEKIIPELQKGKESGFNDRIEAILHQIELNFKNHKPEFGIGLLSSVVSTWVNGLNPVKSLQIDHILNRFKEDYKLNGLKMFQDLLDESVLKDDTPKFKFTMEPDESFGKNLTSQETERLNKKIEALTEEDKEIIYKRSIELAEKQKKEEDVSALPTLTVKDIPREGDFYPLDFADINSKKLQKRIVDTNGLIYMNATKDISYLPSKYYEYLPLFDCCLTNLAGTSKTPITELEIKIQKLTGGVTFNVSAKTDPFDISKTNMKFMLSGMALKDKSQNVYDLWFEILTQTKFDSEDEQVVDKLFTLVKNLGQNQMNTIADSGHSYANSYSNSQLTPTKYIHNLIGGIGQVSFISDLNRKLETEGRDFLKKELLPVLKDIQRHLVNGFTDGNHSGFEYSLVGDSESVIKNEKMIKEFDDLLTANSNRVAGTNELSSLISQFNSNKLGLNNNGRSTLIDLPFQVGYASLAKLGAAYTSKDGAALRVLSQLLTFKHLHSVIREANGAYGGGLSFDGLGGCLNFYSYRDPNPLTSVQSFKDSTSVALGKMINSENNGWSPKDLQEAKLTIFQGVDAPSHISSQGSLDFLEHITDEMRQERRERFLDVTYEDLKNVTEKYLLNGSQDIVTVIGDNETLKIDSSDAQWNIKKLTA.

The transit peptide at 1–33 (MLRLANRVSRKDSGNLGIAQLKKRLLATSGVSQ) directs the protein to the mitochondrion. H105 provides a ligand contact to Zn(2+). Catalysis depends on E108, which acts as the Proton acceptor. H109 is a Zn(2+) binding site. E181 is an active-site residue. E206 contributes to the Zn(2+) binding site.

The protein belongs to the peptidase M16 family. PreP subfamily. Monomer and homodimer; homodimerization is induced by binding of the substrate. It depends on Zn(2+) as a cofactor.

Its subcellular location is the mitochondrion intermembrane space. It localises to the mitochondrion matrix. In terms of biological role, degrades mitochondrial transit peptides after their cleavage in the intermembrane space or in the matrix, and presequence peptides; clearance of these peptides is required to keep the presequence processing machinery running. Preferentially cleaves the N-terminal side of paired basic amino acid residues. Also degrades other unstructured peptides. May function as an ATP-dependent peptidase as opposed to a metalloendopeptidase. In Debaryomyces hansenii (strain ATCC 36239 / CBS 767 / BCRC 21394 / JCM 1990 / NBRC 0083 / IGC 2968) (Yeast), this protein is Presequence protease, mitochondrial (CYM1).